Here is a 311-residue protein sequence, read N- to C-terminus: Aspartate carbamoyltransferase catalytic subunit (311 aa).

Residues R58 and T59 each contribute to the carbamoyl phosphate site. K86 contacts L-aspartate. Residues R108, H136, and Q139 each contribute to the carbamoyl phosphate site. R169 and R224 together coordinate L-aspartate. Carbamoyl phosphate contacts are provided by G265 and P266.

The protein belongs to the aspartate/ornithine carbamoyltransferase superfamily. ATCase family. As to quaternary structure, heterododecamer (2C3:3R2) of six catalytic PyrB chains organized as two trimers (C3), and six regulatory PyrI chains organized as three dimers (R2).

The catalysed reaction is carbamoyl phosphate + L-aspartate = N-carbamoyl-L-aspartate + phosphate + H(+). It functions in the pathway pyrimidine metabolism; UMP biosynthesis via de novo pathway; (S)-dihydroorotate from bicarbonate: step 2/3. In terms of biological role, catalyzes the condensation of carbamoyl phosphate and aspartate to form carbamoyl aspartate and inorganic phosphate, the committed step in the de novo pyrimidine nucleotide biosynthesis pathway. The sequence is that of Aspartate carbamoyltransferase catalytic subunit from Geobacter sulfurreducens (strain ATCC 51573 / DSM 12127 / PCA).